Here is a 593-residue protein sequence, read N- to C-terminus: Tyrosine-protein phosphatase non-receptor type 11 (593 aa).

2 consecutive SH2 domains span residues 6-102 (WFHP…KYPL) and 112-216 (WFHG…KQPL). Residues 247-521 (FWEEFETLQQ…RFIYMAVQHY (275 aa)) form the Tyrosine-protein phosphatase domain. Substrate contacts are provided by residues Asp425, 459–465 (CSAGIGR), and Gln506. Cys459 serves as the catalytic Phosphocysteine intermediate. Polar residues predominate over residues 548–557 (SLSDQTSGDQ). A disordered region spans residues 548-575 (SLSDQTSGDQSPLPPCTPTPTCPEMRED). The span at 559–568 (PLPPCTPTPT) shows a compositional bias: pro residues.

This sequence belongs to the protein-tyrosine phosphatase family. Non-receptor class 2 subfamily. Post-translationally, phosphorylated by tyrosine-protein kinases. In terms of tissue distribution, expressed in embryonic fibroblast, hematopoietic, erythroid, myeloid and lymphoid cells.

It is found in the cytoplasm. It catalyses the reaction O-phospho-L-tyrosyl-[protein] + H2O = L-tyrosyl-[protein] + phosphate. In terms of biological role, this PTPase activity may directly link growth factor receptors and other signaling proteins through protein-tyrosine phosphorylation. The SH2 regions may interact with other cellular components to modulate its own phosphatase activity against interacting substrates. May play a positive role during the stages of erythroid cell proliferation. The protein is Tyrosine-protein phosphatase non-receptor type 11 (PTPN11) of Gallus gallus (Chicken).